The sequence spans 216 residues: RNA pyrophosphohydrolase (216 aa).

Residues Gly6 to Thr149 enclose the Nudix hydrolase domain. The Nudix box signature appears at Gly38–Gly59. Positions Ala159 to Thr191 are disordered.

This sequence belongs to the Nudix hydrolase family. RppH subfamily. It depends on a divalent metal cation as a cofactor.

Its function is as follows. Accelerates the degradation of transcripts by removing pyrophosphate from the 5'-end of triphosphorylated RNA, leading to a more labile monophosphorylated state that can stimulate subsequent ribonuclease cleavage. In Burkholderia pseudomallei (strain 668), this protein is RNA pyrophosphohydrolase.